The primary structure comprises 487 residues: Betaine aldehyde dehydrogenase (487 aa).

Positions 27 and 93 each coordinate K(+). An NAD(+)-binding site is contributed by 149–151; the sequence is GAW. K161 serves as the catalytic Charge relay system. NAD(+) is bound by residues 175-178 and 228-231; these read KPSE and SVPT. L243 contacts K(+). The active-site Proton acceptor is E249. NAD(+) contacts are provided by G251, C283, and E384. The active-site Nucleophile is C283. Position 283 is a cysteine sulfenic acid (-SOH) (C283). The K(+) site is built by K454 and G457. The Charge relay system role is filled by E461.

The protein belongs to the aldehyde dehydrogenase family. In terms of assembly, dimer of dimers. The cofactor is K(+).

The enzyme catalyses betaine aldehyde + NAD(+) + H2O = glycine betaine + NADH + 2 H(+). It participates in amine and polyamine biosynthesis; betaine biosynthesis via choline pathway; betaine from betaine aldehyde: step 1/1. Its function is as follows. Involved in the biosynthesis of the osmoprotectant glycine betaine. Catalyzes the irreversible oxidation of betaine aldehyde to the corresponding acid. This is Betaine aldehyde dehydrogenase from Brucella canis (strain ATCC 23365 / NCTC 10854 / RM-666).